The primary structure comprises 317 residues: Pseudouridine-5'-phosphate glycosidase (317 aa).

Glu27 acts as the Proton donor in catalysis. Residues Lys89 and Val109 each coordinate substrate. Position 141 (Asp141) interacts with Mn(2+). 143 to 145 is a substrate binding site; the sequence is SAD. The Nucleophile role is filled by Lys162.

This sequence belongs to the pseudouridine-5'-phosphate glycosidase family. As to quaternary structure, homotrimer. Mn(2+) serves as cofactor.

It carries out the reaction D-ribose 5-phosphate + uracil = psi-UMP + H2O. Functionally, catalyzes the reversible cleavage of pseudouridine 5'-phosphate (PsiMP) to ribose 5-phosphate and uracil. Functions biologically in the cleavage direction, as part of a pseudouridine degradation pathway. The chain is Pseudouridine-5'-phosphate glycosidase from Sorangium cellulosum (strain So ce56) (Polyangium cellulosum (strain So ce56)).